A 227-amino-acid chain; its full sequence is Lipoprotein-releasing system ATP-binding protein LolD (227 aa).

Residues Leu-6–Val-227 form the ABC transporter domain. An ATP-binding site is contributed by Ala-43–Ser-50.

It belongs to the ABC transporter superfamily. Lipoprotein translocase (TC 3.A.1.125) family. The complex is composed of two ATP-binding proteins (LolD) and two transmembrane proteins (LolC and LolE).

Its subcellular location is the cell inner membrane. Functionally, part of the ABC transporter complex LolCDE involved in the translocation of mature outer membrane-directed lipoproteins, from the inner membrane to the periplasmic chaperone, LolA. Responsible for the formation of the LolA-lipoprotein complex in an ATP-dependent manner. This is Lipoprotein-releasing system ATP-binding protein LolD from Roseobacter denitrificans (strain ATCC 33942 / OCh 114) (Erythrobacter sp. (strain OCh 114)).